Consider the following 213-residue polypeptide: Thiamine-phosphate synthase (213 aa).

4-amino-2-methyl-5-(diphosphooxymethyl)pyrimidine contacts are provided by residues 40-44 (QYRDK) and Asn72. Asp73 and Asp91 together coordinate Mg(2+). Position 110 (Thr110) interacts with 4-amino-2-methyl-5-(diphosphooxymethyl)pyrimidine. 137–139 (SHT) contributes to the 2-[(2R,5Z)-2-carboxy-4-methylthiazol-5(2H)-ylidene]ethyl phosphate binding site. Lys140 lines the 4-amino-2-methyl-5-(diphosphooxymethyl)pyrimidine pocket. Gly167 is a 2-[(2R,5Z)-2-carboxy-4-methylthiazol-5(2H)-ylidene]ethyl phosphate binding site.

Belongs to the thiamine-phosphate synthase family. It depends on Mg(2+) as a cofactor.

The catalysed reaction is 2-[(2R,5Z)-2-carboxy-4-methylthiazol-5(2H)-ylidene]ethyl phosphate + 4-amino-2-methyl-5-(diphosphooxymethyl)pyrimidine + 2 H(+) = thiamine phosphate + CO2 + diphosphate. It catalyses the reaction 2-(2-carboxy-4-methylthiazol-5-yl)ethyl phosphate + 4-amino-2-methyl-5-(diphosphooxymethyl)pyrimidine + 2 H(+) = thiamine phosphate + CO2 + diphosphate. The enzyme catalyses 4-methyl-5-(2-phosphooxyethyl)-thiazole + 4-amino-2-methyl-5-(diphosphooxymethyl)pyrimidine + H(+) = thiamine phosphate + diphosphate. Its pathway is cofactor biosynthesis; thiamine diphosphate biosynthesis; thiamine phosphate from 4-amino-2-methyl-5-diphosphomethylpyrimidine and 4-methyl-5-(2-phosphoethyl)-thiazole: step 1/1. In terms of biological role, condenses 4-methyl-5-(beta-hydroxyethyl)thiazole monophosphate (THZ-P) and 2-methyl-4-amino-5-hydroxymethyl pyrimidine pyrophosphate (HMP-PP) to form thiamine monophosphate (TMP). The protein is Thiamine-phosphate synthase of Stutzerimonas stutzeri (strain A1501) (Pseudomonas stutzeri).